Reading from the N-terminus, the 103-residue chain is MILTTTPNIEGKPVLEYLGIVTGEAIMGANIVRDFFAAVTDIVGGRSGAYEQKLSHARQIALNEMAEEARRLGANAVVGIDIDYEVVRDGMLMVTASGTAVKI.

It belongs to the UPF0145 family.

The sequence is that of UPF0145 protein PTH_2690 from Pelotomaculum thermopropionicum (strain DSM 13744 / JCM 10971 / SI).